The chain runs to 586 residues: Probable transporter AQR1 (586 aa).

2 disordered regions span residues 1–44 and 61–82; these read MSRS…FEGA and EGDLDSETSSHSSDDKVDPTQQ. At 1-99 the chain is on the extracellular side; the sequence is MSRSNSIYTE…PYTLLSYGQK (99 aa). Residues 19–40 are compositionally biased toward basic and acidic residues; it reads NEQHLTREYTKPDGQTKSEKLN. Residues 100-120 form a helical membrane-spanning segment; sequence WGMVAILTMCGFWSSLGSPIY. The Cytoplasmic portion of the chain corresponds to 121–139; sequence YPALRQLEKQFNVDENMVN. A helical membrane pass occupies residues 140-160; it reads VTVVVYLLFQGISPTVSGGLA. Residues 161-166 are Extracellular-facing; sequence DCFGRR. Residues 167-187 traverse the membrane as a helical segment; sequence PIILAGMLIYVIASIGLACAP. Position 188 (S188) is a topological domain, cytoplasmic. A helical membrane pass occupies residues 189-209; that stretch reads YGVIIFLRCIQSIGISPTIAI. The Extracellular portion of the chain corresponds to 210–225; that stretch reads SSGVVGDFTLKHERGT. The helical transmembrane segment at 226-246 threads the bilayer; the sequence is FVGATSGFVLLGQCFGSLIGA. The Cytoplasmic portion of the chain corresponds to 247-255; that stretch reads VLTARWDWR. The chain crosses the membrane as a helical span at residues 256 to 276; that stretch reads AIFWFLTIGCGSCFLIAFLIL. Residues 277-334 lie on the Extracellular side of the membrane; that stretch reads PETKRTIAGNLSIKPKRFINRAPIFLLGPVRRRFKYDNPDYETLDPTIPKLDLSSAGK. The helical transmembrane segment at 335–355 threads the bilayer; that stretch reads ILVLPEIILSLFPSGLLFAMW. The Cytoplasmic portion of the chain corresponds to 356–374; the sequence is TLMLSSISSGLSVAPYNYH. The chain crosses the membrane as a helical span at residues 375–395; it reads LVIIGVCYLPGGIGGLMGSFF. The Extracellular portion of the chain corresponds to 396-433; it reads TGRIIDMYFKRKIKKFEQDKANGLIPQDAEINMFKVRL. The chain crosses the membrane as a helical span at residues 434-454; that stretch reads VCLLPQNFLAVVAYLLFGWSI. The Cytoplasmic portion of the chain corresponds to 455-459; the sequence is DKGWR. Residues 460 to 480 traverse the membrane as a helical segment; sequence IESILITSFVCSYCAMSTLST. The Extracellular portion of the chain corresponds to 481–523; sequence STTLLVDLYPTKSSTASSCFNFVRCSLSTIFMGCFAKMKAAMT. A helical membrane pass occupies residues 524–544; sequence VGGTFTFLCALVFFFNFLMFI. Residues 545–586 lie on the Cytoplasmic side of the membrane; the sequence is PMKYGMKWREDRLLKQQRQSWLNTLAVKAKKGTKRDQNDNHN.

It belongs to the major facilitator superfamily. CAR1 family.

The protein resides in the membrane. Functionally, probable transporter that confers resistance to short-chain monocarboxylic acids and quinidine. This chain is Probable transporter AQR1 (AQR1), found in Saccharomyces cerevisiae (strain ATCC 204508 / S288c) (Baker's yeast).